We begin with the raw amino-acid sequence, 704 residues long: 1,4-alpha-glucan-branching enzyme (704 aa).

Residues tryptophan 94 and lysine 131 each coordinate (1,4-alpha-D-glucosyl)n. At serine 190 the chain carries Phosphoserine. The Nucleophile role is filled by aspartate 356. Residue glutamate 417 is the Proton donor of the active site.

This sequence belongs to the glycosyl hydrolase 13 family. GlgB subfamily.

Its subcellular location is the cytoplasm. It carries out the reaction Transfers a segment of a (1-&gt;4)-alpha-D-glucan chain to a primary hydroxy group in a similar glucan chain.. Its pathway is glycan biosynthesis; glycogen biosynthesis. In terms of biological role, glycogen-branching enzyme participates in the glycogen biosynthetic process along with glycogenin and glycogen synthase. Generates alpha-1,6-glucosidic branches from alpha-1,4-linked glucose chains, to increase solubility of the glycogen polymer. The chain is 1,4-alpha-glucan-branching enzyme (GLC3) from Saccharomyces cerevisiae (strain ATCC 204508 / S288c) (Baker's yeast).